The following is a 327-amino-acid chain: 2-methoxy-6-polyprenyl-1,4-benzoquinol methylase, mitochondrial (327 aa).

The transit peptide at 1-43 (MAAPIRAFVLRVLSDSTRNIHHVLRCRSKYLCRRAAITARRGY) directs the protein to the mitochondrion. S-adenosyl-L-methionine-binding positions include T117, D171, and 199–200 (DA).

This sequence belongs to the class I-like SAM-binding methyltransferase superfamily. MenG/UbiE family. Component of a multi-subunit COQ enzyme complex, composed of at least coq3, coq4, coq5, coq6, coq7 and coq9.

Its subcellular location is the mitochondrion inner membrane. The catalysed reaction is a 2-methoxy-6-(all-trans-polyprenyl)benzene-1,4-diol + S-adenosyl-L-methionine = a 5-methoxy-2-methyl-3-(all-trans-polyprenyl)benzene-1,4-diol + S-adenosyl-L-homocysteine + H(+). It participates in cofactor biosynthesis; ubiquinone biosynthesis. Methyltransferase required for the conversion of 2-polyprenyl-6-methoxy-1,4-benzoquinol (DDMQH2) to 2-polyprenyl-3-methyl-6-methoxy-1,4-benzoquinol (DMQH2). The chain is 2-methoxy-6-polyprenyl-1,4-benzoquinol methylase, mitochondrial from Danio rerio (Zebrafish).